Consider the following 635-residue polypeptide: Sodium-dependent multivitamin transporter (635 aa).

The next 3 membrane-spanning stretches (helical) occupy residues 24–44 (FSIMDYVVFVLLLVLSLAIGL), 68–88 (CLPVALSLLATFQSAVAILGV), and 101–121 (FLGCCYFLGLLIPAHIFIPVF). Asn-138 carries an N-linked (GlcNAc...) asparagine glycan. Transmembrane regions (helical) follow at residues 143 to 163 (VCGTVTFIFQMVIYMGVVLYA), 176 to 196 (LWLSVLALGIVCTVYTALGGL), 199 to 219 (VIWTDVFQTLVMFLGQLAVII), 256 to 276 (FWTLAFGGVFMMLSLYGVNQA), 297 to 317 (VFPFQQVSLCVGCLIGLVMFA), 336 to 356 (FVLYFVMDLLKGLPGLPGLFI), 396 to 416 (IMLSRGLAFGYGLLCLGMAYI), 428 to 448 (ISIFGMVGGPLLGLFCLGMFF), and 456 to 476 (AVVGLLAGLVMAFWIGIGSIV). Residues Asn-489 and Asn-498 are each glycosylated (N-linked (GlcNAc...) asparagine). The chain crosses the membrane as a helical span at residues 528–548 (LWYSAHNSTTVIVVGLIVSLL).

The protein belongs to the sodium:solute symporter (SSF) (TC 2.A.21) family. Interacts with PDZD11. In terms of processing, may be glycosylated. As to expression, expressed in microvessels of the brain (at protein level). Expressed in heart, brain, placenta, lung, liver, skeletal muscle, kidney, and pancreas.

The protein localises to the cell membrane. It is found in the apical cell membrane. The catalysed reaction is biotin(out) + 2 Na(+)(out) = biotin(in) + 2 Na(+)(in). The enzyme catalyses (R)-pantothenate(out) + 2 Na(+)(out) = (R)-pantothenate(in) + 2 Na(+)(in). It carries out the reaction (R)-lipoate(out) + 2 Na(+)(out) = (R)-lipoate(in) + 2 Na(+)(in). It catalyses the reaction iodide(out) + 2 Na(+)(out) = iodide(in) + 2 Na(+)(in). Functionally, sodium-dependent multivitamin transporter that mediates the electrogenic transport of pantothenate, biotin, lipoate and iodide. Functions as a Na(+)-coupled substrate symporter where the stoichiometry of Na(+):substrate is 2:1, creating an electrochemical Na(+) gradient used as driving force for substrate uptake. Required for biotin and pantothenate uptake in the intestine across the brush border membrane. Plays a role in the maintenance of intestinal mucosa integrity, by providing the gut mucosa with biotin. Contributes to the luminal uptake of biotin and pantothenate into the brain across the blood-brain barrier. This chain is Sodium-dependent multivitamin transporter, found in Homo sapiens (Human).